Reading from the N-terminus, the 661-residue chain is 1-deoxy-D-xylulose-5-phosphate synthase (661 aa).

Thiamine diphosphate is bound by residues H98 and 139–141 (AHS). Position 170 (D170) interacts with Mg(2+). Thiamine diphosphate contacts are provided by residues 171-172 (GA), N199, Y309, and E391. Residue N199 participates in Mg(2+) binding.

It belongs to the transketolase family. DXPS subfamily. In terms of assembly, homodimer. It depends on Mg(2+) as a cofactor. The cofactor is thiamine diphosphate.

The enzyme catalyses D-glyceraldehyde 3-phosphate + pyruvate + H(+) = 1-deoxy-D-xylulose 5-phosphate + CO2. It participates in metabolic intermediate biosynthesis; 1-deoxy-D-xylulose 5-phosphate biosynthesis; 1-deoxy-D-xylulose 5-phosphate from D-glyceraldehyde 3-phosphate and pyruvate: step 1/1. In terms of biological role, catalyzes the acyloin condensation reaction between C atoms 2 and 3 of pyruvate and glyceraldehyde 3-phosphate to yield 1-deoxy-D-xylulose-5-phosphate (DXP). The sequence is that of 1-deoxy-D-xylulose-5-phosphate synthase from Bradyrhizobium diazoefficiens (strain JCM 10833 / BCRC 13528 / IAM 13628 / NBRC 14792 / USDA 110).